The chain runs to 306 residues: Formamidopyrimidine-DNA glycosylase (306 aa).

The active-site Schiff-base intermediate with DNA is Pro-2. The Proton donor role is filled by Glu-3. Lys-58 functions as the Proton donor; for beta-elimination activity in the catalytic mechanism. Residues His-114, Arg-136, and Lys-179 each contribute to the DNA site. The FPG-type zinc-finger motif lies at 270–306; the sequence is SVYDREGEACRTSGCRGTVERIVQAGRSTFYCPHCQK. The Proton donor; for delta-elimination activity role is filled by Arg-296.

The protein belongs to the FPG family. As to quaternary structure, monomer. The cofactor is Zn(2+).

The catalysed reaction is Hydrolysis of DNA containing ring-opened 7-methylguanine residues, releasing 2,6-diamino-4-hydroxy-5-(N-methyl)formamidopyrimidine.. It catalyses the reaction 2'-deoxyribonucleotide-(2'-deoxyribose 5'-phosphate)-2'-deoxyribonucleotide-DNA = a 3'-end 2'-deoxyribonucleotide-(2,3-dehydro-2,3-deoxyribose 5'-phosphate)-DNA + a 5'-end 5'-phospho-2'-deoxyribonucleoside-DNA + H(+). In terms of biological role, involved in base excision repair of DNA damaged by oxidation or by mutagenic agents. Acts as a DNA glycosylase that recognizes and removes damaged bases. Has a preference for oxidized purines, such as 7,8-dihydro-8-oxoguanine (8-oxoG). Has AP (apurinic/apyrimidinic) lyase activity and introduces nicks in the DNA strand. Cleaves the DNA backbone by beta-delta elimination to generate a single-strand break at the site of the removed base with both 3'- and 5'-phosphates. This Sinorhizobium medicae (strain WSM419) (Ensifer medicae) protein is Formamidopyrimidine-DNA glycosylase.